The following is a 123-amino-acid chain: Small ribosomal subunit protein uS12 (123 aa).

A 3-methylthioaspartic acid modification is found at D89. A disordered region spans residues 102–123 (LDTSGVQDRRQRRSKYGAKRPK). Residues 111 to 123 (RQRRSKYGAKRPK) are compositionally biased toward basic residues.

Belongs to the universal ribosomal protein uS12 family. As to quaternary structure, part of the 30S ribosomal subunit. Contacts proteins S8 and S17. May interact with IF1 in the 30S initiation complex.

In terms of biological role, with S4 and S5 plays an important role in translational accuracy. Interacts with and stabilizes bases of the 16S rRNA that are involved in tRNA selection in the A site and with the mRNA backbone. Located at the interface of the 30S and 50S subunits, it traverses the body of the 30S subunit contacting proteins on the other side and probably holding the rRNA structure together. The combined cluster of proteins S8, S12 and S17 appears to hold together the shoulder and platform of the 30S subunit. This Lawsonia intracellularis (strain PHE/MN1-00) protein is Small ribosomal subunit protein uS12.